The chain runs to 356 residues: Probable cinnamyl alcohol dehydrogenase (356 aa).

Cys-47 is a Zn(2+) binding site. Ser-49 serves as a coordination point for NADP(+). Residues His-69, Glu-70, Cys-100, Cys-103, Cys-106, Cys-114, and Cys-163 each coordinate Zn(2+). NADP(+)-binding positions include Thr-167, 188–193 (GLGGVG), 211–216 (SSSDKK), Thr-251, Gly-275, and 298–300 (SFI).

The protein belongs to the zinc-containing alcohol dehydrogenase family. Homodimer. The cofactor is Zn(2+).

It carries out the reaction (E)-cinnamyl alcohol + NADP(+) = (E)-cinnamaldehyde + NADPH + H(+). The catalysed reaction is (E)-coniferol + NADP(+) = (E)-coniferaldehyde + NADPH + H(+). The enzyme catalyses (E)-sinapyl alcohol + NADP(+) = (E)-sinapaldehyde + NADPH + H(+). It catalyses the reaction (E)-4-coumaroyl alcohol + NADP(+) = (E)-4-coumaraldehyde + NADPH + H(+). It carries out the reaction (E)-caffeyl alcohol + NADP(+) = (E)-caffeyl aldehyde + NADPH + H(+). It participates in aromatic compound metabolism; phenylpropanoid biosynthesis. Its function is as follows. Involved in lignin biosynthesis. Catalyzes the final step specific for the production of lignin monomers. Catalyzes the NADPH-dependent reduction of coniferaldehyde, 5-hydroxyconiferaldehyde, sinapaldehyde, 4-coumaraldehyde and caffeyl aldehyde to their respective alcohols. The protein is Probable cinnamyl alcohol dehydrogenase (CAD) of Eucalyptus globulus (Tasmanian blue gum).